Here is a 336-residue protein sequence, read N- to C-terminus: Phosphoribosylformylglycinamidine cyclo-ligase (336 aa).

It belongs to the AIR synthase family.

The protein resides in the cytoplasm. It carries out the reaction 2-formamido-N(1)-(5-O-phospho-beta-D-ribosyl)acetamidine + ATP = 5-amino-1-(5-phospho-beta-D-ribosyl)imidazole + ADP + phosphate + H(+). Its pathway is purine metabolism; IMP biosynthesis via de novo pathway; 5-amino-1-(5-phospho-D-ribosyl)imidazole from N(2)-formyl-N(1)-(5-phospho-D-ribosyl)glycinamide: step 2/2. The sequence is that of Phosphoribosylformylglycinamidine cyclo-ligase from Thermoanaerobacter sp. (strain X514).